A 238-amino-acid polypeptide reads, in one-letter code: 1-(5-phosphoribosyl)-5-[(5-phosphoribosylamino)methylideneamino] imidazole-4-carboxamide isomerase (238 aa).

Asp-8 acts as the Proton acceptor in catalysis. Asp-130 serves as the catalytic Proton donor.

This sequence belongs to the HisA/HisF family.

The protein localises to the cytoplasm. The catalysed reaction is 1-(5-phospho-beta-D-ribosyl)-5-[(5-phospho-beta-D-ribosylamino)methylideneamino]imidazole-4-carboxamide = 5-[(5-phospho-1-deoxy-D-ribulos-1-ylimino)methylamino]-1-(5-phospho-beta-D-ribosyl)imidazole-4-carboxamide. Its pathway is amino-acid biosynthesis; L-histidine biosynthesis; L-histidine from 5-phospho-alpha-D-ribose 1-diphosphate: step 4/9. The polypeptide is 1-(5-phosphoribosyl)-5-[(5-phosphoribosylamino)methylideneamino] imidazole-4-carboxamide isomerase (Methanococcus maripaludis (strain C5 / ATCC BAA-1333)).